The primary structure comprises 142 residues: Large ribosomal subunit protein uL13 (142 aa).

Belongs to the universal ribosomal protein uL13 family. In terms of assembly, part of the 50S ribosomal subunit.

In terms of biological role, this protein is one of the early assembly proteins of the 50S ribosomal subunit, although it is not seen to bind rRNA by itself. It is important during the early stages of 50S assembly. This is Large ribosomal subunit protein uL13 from Wigglesworthia glossinidia brevipalpis.